Reading from the N-terminus, the 226-residue chain is Putative mitochondrial outer membrane protein porin 5 (226 aa).

It belongs to the eukaryotic mitochondrial porin (TC 1.B.8.1) family.

The protein localises to the mitochondrion outer membrane. Putative channel that allows diffusion of small hydrophilic molecules through membranes. The sequence is that of Putative mitochondrial outer membrane protein porin 5 (VDAC5) from Arabidopsis thaliana (Mouse-ear cress).